The primary structure comprises 571 residues: MTDKKTLKDLRNRSSVYDSMVKSPNRAMLRATGMQDEDFEKPIVGVISTWAENTPCNIHLHDFGKLAKVGVKEAGAWPVQFGTITVSDGIAMGTQGMRFSLTSRDIIADSIEAAMGGHNADAFVAIGGCDKNMPGSVIAMANMDIPAIFAYGGTIAPGNLDGKDIDLVSVFEGVGHWNHGDMTKEEVKALECNACPGPGGCGGMYTANTMATAIEVLGLSLPGSSSHPAESAEKKADIEEAGRAVVKMLEMGLKPSDILTREAFEDAITVTMALGGSTNSTLHLLAIAHAANVELTLDDFNTFQEKVPHLADLKPSGQYVFQDLYKVGGVPAVMKYLLKNGFLHGDRITCTGKTVAENLKAFDDLTPGQKVIMPLENPKREDGPLIILHGNLAPDGAVAKVSGVKVRRHVGPAKVFNSEEEAIEAVLNDDIVDGDVVVVRFVGPKGGPGMPEMLSLSSMIVGKGQGEKVALLTDGRFSGGTYGLVVGHIAPEAQDGGPIAYLQTGDIVTIDQDTKELHFDISDEELKHRQETIELPPLYSRGILGKYAHIVSSASRGAVTDFWKPEETGKK.

C56 lines the [2Fe-2S] cluster pocket. A Mg(2+)-binding site is contributed by D88. C129 serves as a coordination point for [2Fe-2S] cluster. Residues D130 and K131 each contribute to the Mg(2+) site. Residue K131 is modified to N6-carboxylysine. C201 is a binding site for [2Fe-2S] cluster. A Mg(2+)-binding site is contributed by E452. S478 acts as the Proton acceptor in catalysis.

It belongs to the IlvD/Edd family. In terms of assembly, homodimer. It depends on [2Fe-2S] cluster as a cofactor. Mg(2+) serves as cofactor.

It catalyses the reaction (2R)-2,3-dihydroxy-3-methylbutanoate = 3-methyl-2-oxobutanoate + H2O. It carries out the reaction (2R,3R)-2,3-dihydroxy-3-methylpentanoate = (S)-3-methyl-2-oxopentanoate + H2O. Its pathway is amino-acid biosynthesis; L-isoleucine biosynthesis; L-isoleucine from 2-oxobutanoate: step 3/4. It participates in amino-acid biosynthesis; L-valine biosynthesis; L-valine from pyruvate: step 3/4. Functions in the biosynthesis of branched-chain amino acids. Catalyzes the dehydration of (2R,3R)-2,3-dihydroxy-3-methylpentanoate (2,3-dihydroxy-3-methylvalerate) into 2-oxo-3-methylpentanoate (2-oxo-3-methylvalerate) and of (2R)-2,3-dihydroxy-3-methylbutanoate (2,3-dihydroxyisovalerate) into 2-oxo-3-methylbutanoate (2-oxoisovalerate), the penultimate precursor to L-isoleucine and L-valine, respectively. The chain is Dihydroxy-acid dehydratase from Streptococcus mutans serotype c (strain ATCC 700610 / UA159).